A 97-amino-acid chain; its full sequence is Sm-like protein LSM3A (97 aa).

The residue at position 2 (serine 2) is an N-acetylserine. One can recognise a Sm domain in the interval 11–96 (EPLDLIRLSI…VILVSPPLRT (86 aa)).

The protein belongs to the snRNP Sm proteins family. In terms of assembly, component of the heptameric LSM1-LSM7 complex that forms a seven-membered ring structure with a donut shape. The LSM subunits are arranged in the order LSM1, LSM2, LSM3, LSM6, LSM5, LSM7 and LSM4. Component of the heptameric LSM2-LSM8 complex that forms a seven-membered ring structure with a donut shape. The LSM subunits are arranged in the order LSM8, LSM2, LSM3, LSM6, LSM5, LSM7 and LSM4. LSM3A subunit interacts only with its two neighboring subunits, LSM2 and LSM6A or LSM6B. As to expression, expressed in roots, leaves, stems, flowers and siliques.

The protein localises to the cytoplasm. Its subcellular location is the nucleus. In terms of biological role, component of LSM protein complexes, which are involved in RNA processing. Component of the cytoplasmic LSM1-LSM7 complex which is involved in mRNA degradation by promoting decapping and leading to accurate 5'-3' mRNA decay. The cytoplasmic LSM1-LSM7 complex regulates developmental gene expression by the decapping of specific development-related transcripts. Component of the nuclear LSM2-LSM8 complex which is involved splicing nuclear mRNAs. LSM2-LSM8 binds directly to the U6 small nuclear RNAs (snRNAs) and is essential for accurate splicing of selected development-related mRNAs through the stabilization of the spliceosomal U6 snRNA. Plays a critical role in the regulation of development-related gene expression. The protein is Sm-like protein LSM3A of Arabidopsis thaliana (Mouse-ear cress).